The following is a 287-amino-acid chain: Oxaloacetate decarboxylase (287 aa).

S50 contributes to the substrate binding site. D88 lines the Mg(2+) pocket. The substrate site is built by R159 and H235.

Belongs to the isocitrate lyase family. Oxaloacetate decarboxylase subfamily. Homotetramer; dimer of dimers. Mg(2+) serves as cofactor.

It carries out the reaction oxaloacetate + H(+) = pyruvate + CO2. Functionally, catalyzes the decarboxylation of oxaloacetate into pyruvate. Seems to play a role in maintaining cellular concentrations of bicarbonate and pyruvate. In Pseudomonas aeruginosa (strain LESB58), this protein is Oxaloacetate decarboxylase.